We begin with the raw amino-acid sequence, 82 residues long: Small ribosomal subunit protein uS17 (82 aa).

This sequence belongs to the universal ribosomal protein uS17 family. Part of the 30S ribosomal subunit.

One of the primary rRNA binding proteins, it binds specifically to the 5'-end of 16S ribosomal RNA. This chain is Small ribosomal subunit protein uS17, found in Shewanella woodyi (strain ATCC 51908 / MS32).